Here is a 271-residue protein sequence, read N- to C-terminus: Short-chain dehydrogenase/reductase SAT3 (271 aa).

NADP(+)-binding residues include serine 17, aspartate 40, and asparagine 67. Serine 153 serves as the catalytic Proton donor. NADP(+) is bound by residues tyrosine 168, lysine 172, and serine 203. The Proton acceptor role is filled by tyrosine 168. The Lowers pKa of active site Tyr role is filled by lysine 172.

It belongs to the short-chain dehydrogenases/reductases (SDR) family.

The protein operates within mycotoxin biosynthesis. Its function is as follows. Short-chain dehydrogenase/reductase; part of the satratoxin SC1 cluster involved in the biosynthesis of satratoxins, trichothecene mycotoxins that are associated with human food poisonings. Satratoxins are suggested to be made by products of multiple gene clusters (SC1, SC2 and SC3) that encode 21 proteins in all, including polyketide synthases, acetyltransferases, and other enzymes expected to modify the trichothecene skeleton. SC1 encodes 10 proteins, SAT1 to SAT10. The largest are SAT8, which encodes a putative polyketide synthase (PKS) with a conventional non-reducing architecture, and SAT10, a putative protein containing four ankyrin repeats and thus may be involved in protein scaffolding. The putative short-chain reductase SAT3 may assist the PKS in some capacity. SAT6 contains a secretory lipase domain and acts probably as a trichothecene esterase. SAT5 encodes a putative acetyltransferase, and so, with SAT6, may affect endogenous protection from toxicity. The probable transcription factor SAT9 may regulate the expression of the SC1 cluster. SC2 encodes proteins SAT11 to SAT16, the largest of which encodes the putative reducing PKS SAT13. SAT11 is a cytochrome P450 monooxygenase, while SAT14 and SAT16 are probable acetyltransferases. The SC2 cluster may be regulated by the transcription factor SAT15. SC3 is a small cluster that encodes 5 proteins, SAT17 to SAT21. SAT21 is a putative MFS-type transporter which may have a role in exporting secondary metabolites. The four other proteins putatively encoded in SC3 include the taurine hydroxylase-like protein SAT17, the O-methyltransferase SAT18, the acetyltransferase SAT19, and the Cys6-type zinc finger SAT20, the latter being probably involved in regulation of SC3 expression. The polypeptide is Short-chain dehydrogenase/reductase SAT3 (Stachybotrys chartarum (strain CBS 109288 / IBT 7711) (Toxic black mold)).